The chain runs to 117 residues: Appetite-regulating hormone (117 aa).

Positions 1–23 (MPSPGTVCSLLLLGMLWLDLAMA) are cleaved as a signal peptide. Ser-26 carries the O-decanoyl serine; alternate lipid modification. Residue Ser-26 is the site of O-hexanoyl serine; alternate attachment. The O-octanoyl serine; alternate moiety is linked to residue Ser-26. Residues 29–67 (SPEHQRAQQRKESKKPPAKLQPRALGGWLRPEDGDQAEG) are disordered. Residues 31–43 (EHQRAQQRKESKK) are compositionally biased toward basic and acidic residues. Positions 52 to 75 (ALGGWLRPEDGDQAEGAEDELEIQ) are cleaved as a propeptide — removed in mature form. Leu-98 is subject to Leucine amide. The propeptide at 99–117 (GKFLQDILWEEAKEAPADK) is removed in mature form.

This sequence belongs to the motilin family. In terms of processing, O-octanoylated by GOAT/MBOAT4. O-octanoylation is essential for ghrelin activity. Amidation of Leu-98 is essential for obestatin activity.

Its subcellular location is the secreted. Its function is as follows. Ghrelin is the ligand for growth hormone secretagogue receptor type 1 (GHSR). Induces the release of growth hormone from the pituitary. Has an appetite-stimulating effect, induces adiposity and stimulates gastric acid secretion. Involved in growth regulation. Functionally, obestatin may be the ligand for GPR39. May have an appetite-reducing effect resulting in decreased food intake. May reduce gastric emptying activity and jejunal motility. In Papio hamadryas (Hamadryas baboon), this protein is Appetite-regulating hormone (GHRL).